Here is a 111-residue protein sequence, read N- to C-terminus: Prothymosin alpha (111 aa).

An N-acetylmethionine modification is found at Met-1. Residues 1–111 (MSDAAVDTSS…TKKQKTDEDD (111 aa)) form a disordered region. Ser-2 carries the post-translational modification N-acetylserine; in Prothymosin alpha, N-terminally processed. At Ser-2 the chain carries Phosphoserine. Thr-8 is modified (phosphothreonine). Ser-9 and Ser-10 each carry phosphoserine. Phosphothreonine is present on residues Thr-13 and Thr-14. Residues 13 to 31 (TTKDLKEKKEVVEEAENGR) are compositionally biased toward basic and acidic residues. N6-acetyllysine; alternate is present on Lys-15. Lys-15 bears the N6-succinyllysine; alternate mark. A compositionally biased stretch (acidic residues) spans 40–84 (ENEENGEQEADNEVDEEEEEGGEEEEEEEEGDGEEEDGDEDEEAE). The segment covering 101–111 (DTKKQKTDEDD) has biased composition (basic and acidic residues). Thr-102 is modified (phosphothreonine). Lys-103 carries the N6-acetyllysine; alternate modification. A Glycyl lysine isopeptide (Lys-Gly) (interchain with G-Cter in SUMO2); alternate cross-link involves residue Lys-103. Thr-107 is modified (phosphothreonine).

This sequence belongs to the pro/parathymosin family. In terms of assembly, interacts with NUPR1; regulates apoptotic process. Covalently linked to a small RNA of about 20 nucleotides.

The protein localises to the nucleus. Its function is as follows. Prothymosin alpha may mediate immune function by conferring resistance to certain opportunistic infections. The sequence is that of Prothymosin alpha (PTMA) from Homo sapiens (Human).